The sequence spans 207 residues: Urease accessory protein UreG (207 aa).

Position 12-19 (12-19) interacts with GTP; sequence GPVGAGKT.

This sequence belongs to the SIMIBI class G3E GTPase family. UreG subfamily. Homodimer. UreD, UreF and UreG form a complex that acts as a GTP-hydrolysis-dependent molecular chaperone, activating the urease apoprotein by helping to assemble the nickel containing metallocenter of UreC. The UreE protein probably delivers the nickel.

It localises to the cytoplasm. Its function is as follows. Facilitates the functional incorporation of the urease nickel metallocenter. This process requires GTP hydrolysis, probably effectuated by UreG. This is Urease accessory protein UreG from Cereibacter sphaeroides (strain KD131 / KCTC 12085) (Rhodobacter sphaeroides).